A 146-amino-acid chain; its full sequence is Hemoglobin subunit beta (146 aa).

The residue at position 1 (Val1) is an N-acetylvaline. The region spanning 2–146 is the Globin domain; that stretch reads HLTGEEKSAV…VANALAHKYH (145 aa). Position 12 is a phosphothreonine (Thr12). The residue at position 44 (Ser44) is a Phosphoserine. At Lys59 the chain carries N6-acetyllysine. His63 provides a ligand contact to heme b. Lys82 carries the post-translational modification N6-acetyllysine. Position 92 (His92) interacts with heme b. Cys93 is subject to S-nitrosocysteine. At Lys144 the chain carries N6-acetyllysine.

The protein belongs to the globin family. Heterotetramer of two alpha chains and two beta chains. In terms of tissue distribution, red blood cells.

Involved in oxygen transport from the lung to the various peripheral tissues. The sequence is that of Hemoglobin subunit beta (HBB) from Leontocebus fuscicollis (Brown-mantled tamarin).